A 1310-amino-acid polypeptide reads, in one-letter code: MNMGSVAGAVLKMLLLLSTQNWNRVEAGNSYDCDEPLVSALPQASFSSSSELSSSHGPGFARLNRRDGAGGWSPLVSNKYQWLQIDLGERMEVTSVATQGGYGSSNWVTSYLLMFSDSGRNWKQYRQEDSIWGFSGNANADSVVYYRLQPSIKARFLRFIPLEWNPKGRIGMRIEVFGCAYRSVVIDLDGKSSLLYRFDQNSLSPIRDIISLKFKTMESDGILLHRAGPAGDHITLELRRGKLFLLINSGDARLTSSSTLINLTLGSLLDDQHWHSVLIQRLGKQVNFTVDEHRRHFHAQGEFNYLDLDYEISFGGISAPAKSVSLPYKHFHGCLENLFYNGVDVIGLVKEHSPQIITMGNASFSCSQPQSMPLTFLSPRSYLVLPASTKEEAISASFQFRTWNKAGLLLFSELQLVSGSLLLLLSDGKLKLTLYQPGKSPSDITAGAGLGDGQWHSVSLSAKRNHLSVVVDGHISPASPWLGPEQVNSGGVFYFGGCPDKGFGSKCKSPLGGFQGCMRLISINNKMVDLIAVQQGALGNFSDLQIDSCGISDRCLPNSCEHGGECSQSWSTFHCNCTNTGYTGATCHSSVYEQSCEAYKHQGNASGFYYIDSDGSGPLQPFLLYCNMTETAWTVMQHNGSDLMRVRNTHSENAHTGVFEYTASMEQLQAAINRAEHCQQELVYYCKKSRLVNQQDGSPRSWWVGRTNETQTYWGGSLPVHQKCTCGLEGNCIDAQYHCNCDADLNEWTNDTGFLSYKEHLPVTKIVITDTGRPHSEAAYKLGPLLCRGDRPFWNAASFNTEASYLHFPTFHGELSADVSFFFKTTALSGVFLENLGITDFIRIELRSPTTVTFSFDVGNGPFELSVHSPTHFNDNQWHHVRVERNMKEASLRVDELPPKIQAAPTDGHVLLQLNSQLFVGGTATRQRGFLGCIRSLQLNGMALDLEERATVTPGVQPGCRGHCGSYGKLCRHGGKCREKPSGFFCDCSSSAYAGPFCSKEISAYFGSGSSVIYNFQENYSLSKNSSFHAASFHGDMKLSREMIKFSFRTTRAPSLLLHMSSFYKEYLSIIIAKNGSLQIRYKLNKYHEPDVISFDLKSMADGQLHHIKINREEGMVFVEIDENTRRQTYLSSGTEFSAVKSLVLGRMLEYSDVDQETALAAAHGFTGCLSAVQFSHIAPLKAALQPGPPAPVTVTGHVTESSCVAPSGTDATSRERTHSFADHSGTMDDREPLTHAIKSDSAVIGGLIAVVIFILLCVSAIAVRIYQQKRLYKRNEAKRSENVDSAEAVLKSELHIQNAVGENQKEYFF.

Positions 1–27 are cleaved as a signal peptide; sequence MNMGSVAGAVLKMLLLLSTQNWNRVEA. The Extracellular portion of the chain corresponds to 28-1243; it reads GNSYDCDEPL…LTHAIKSDSA (1216 aa). The F5/8 type C domain maps to 33-179; the sequence is CDEPLVSALP…IGMRIEVFGC (147 aa). Cys33 and Cys179 are oxidised to a cystine. The 133-residue stretch at 214-346 folds into the Laminin G-like 1 domain; that stretch reads FKTMESDGIL…NLFYNGVDVI (133 aa). Residues Asn262, Asn287, and Asn361 are each glycosylated (N-linked (GlcNAc...) asparagine). 4 cysteine pairs are disulfide-bonded: Cys334–Cys366, Cys517–Cys549, Cys555–Cys566, and Cys560–Cys575. Residues 400 to 529 form the Laminin G-like 2 domain; it reads FRTWNKAGLL…LISINNKMVD (130 aa). Residue Asn540 is glycosylated (N-linked (GlcNAc...) asparagine). One can recognise an EGF-like 1 domain in the interval 551–588; that stretch reads ISDRCLPNSCEHGGECSQSWSTFHCNCTNTGYTGATCH. The N-linked (GlcNAc...) asparagine glycan is linked to Asn576. Cys577 and Cys587 are disulfide-bonded. Residues 589–794 enclose the Fibrinogen C-terminal domain; sequence SSVYEQSCEA…LLCRGDRPFW (206 aa). N-linked (GlcNAc...) asparagine glycosylation is found at Asn604, Asn627, Asn639, Asn708, and Asn750. The 166-residue stretch at 795–960 folds into the Laminin G-like 3 domain; the sequence is NAASFNTEAS…TVTPGVQPGC (166 aa). Disulfide bonds link Cys933–Cys960, Cys964–Cys977, Cys971–Cys986, and Cys988–Cys998. The region spanning 960-999 is the EGF-like 2 domain; sequence CRGHCGSYGKLCRHGGKCREKPSGFFCDCSSSAYAGPFCS. N-linked (GlcNAc...) asparagine glycosylation is found at Asn1019, Asn1025, and Asn1075. A Laminin G-like 4 domain is found at 1048 to 1204; sequence FRTTRAPSLL…VTGHVTESSC (157 aa). A disulfide bridge connects residues Cys1169 and Cys1204. The helical transmembrane segment at 1244-1264 threads the bilayer; the sequence is VIGGLIAVVIFILLCVSAIAV. The Cytoplasmic portion of the chain corresponds to 1265-1310; that stretch reads RIYQQKRLYKRNEAKRSENVDSAEAVLKSELHIQNAVGENQKEYFF.

It belongs to the neurexin family. Interacts with TIAM1. As to expression, specifically present in developing cortical interneurons: highly expressed in cortical parvalbumin (PV) cells and midbrain dopaminergic neurons and is localized presynaptically (at protein level). Also present in the substantia nigra pars compacta (SnC) and ventral tegmental area (VTA) midbrain dopaminergic projection populations.

Its subcellular location is the presynaptic cell membrane. In terms of biological role, presynaptic protein involved in both dopaminergic synaptic transmission and GABAergic system, thereby participating in the structural maturation of inhibitory interneuron synapses. Involved in the dopaminergic synaptic transmission by attenuating dopamine release through a presynaptic mechanism. Also participates in the GABAergic system. This is Contactin-associated protein-like 4 (Cntnap4) from Mus musculus (Mouse).